Here is a 327-residue protein sequence, read N- to C-terminus: MKIEKLGKSSVASSIALLLLSNTVDAAQNITPKREKKVDDKITLYKTTATSDNDKLNIFQILTFNFIKDKSYDKDTLVLKAAGNINSGYKNSNPKDYNYSQFYWGGKYNVSVSSESNDAVNVVDYAPKNQNEEFQVQQTLGYSYGGDINISNGLSGGLNGSKSFSETINYKQESYRTTIDRKTNHKSIGWGVEAHKIMNNGWGPYGRDSYDPTYGNELFLGGDKSSSNAGQNFLPTHQIPLLARGNFNPEFISVLSHKLFDTKKSKIKVTYQREMDRYTNQWNRSHWVGNNYKNQNTVTFTSTYEVDWQNILLKLIGTDSKETNPGV.

An N-terminal signal peptide occupies residues 1-26 (MKIEKLGKSSVASSIALLLLSNTVDA).

Belongs to the aerolysin family. Toxicity requires sequential binding and synergistic association of a class S and a class F component which form heterooligomeric complexes. LukE (class S) associates with LukD (class F). LukD can also associate with HlgA.

The protein resides in the secreted. In terms of biological role, part of a bi-component leucotoxin that acts by forming pores in the membrane of the target cells. LukE-LukD is as effective as the Panton-Valentine leucocidin (PVL) for inducing dermonecrosis when injected in the rabbit skin, but not hemolytic and poorly leucotoxic on human blood cells compared to other leucotoxins expressed by S.aureus. HlgA-LukD is a Ca(2+) channel inducer. This chain is Leucotoxin LukD (lukD), found in Staphylococcus aureus.